The sequence spans 217 residues: Nascent polypeptide-associated complex subunit alpha-like protein 2 (217 aa).

A disordered region spans residues 1–81 (MSPPPAVVTE…SEKKSRKAML (81 aa)). Residues 37 to 60 (PIVEDVKDDEDDDDDDEEEEDDDA) show a composition bias toward acidic residues. Residues 70 to 135 (SRSEKKSRKA…AKIEDLSSQL (66 aa)) enclose the NAC-A/B domain. A UBA domain is found at 178 to 215 (VEARDIDLVMTQAGVSRSKAVKALKSHDGDIVSAIMEL).

The protein belongs to the NAC-alpha family.

May promote appropriate targeting of ribosome-nascent polypeptide complexes. The chain is Nascent polypeptide-associated complex subunit alpha-like protein 2 from Arabidopsis thaliana (Mouse-ear cress).